The following is a 270-amino-acid chain: NADPH-dependent aldehyde reductase-like protein, chloroplastic (270 aa).

A chloroplast-targeting transit peptide spans 1 to 53; sequence MSTHSSISQPPLPLAGRVAIVTGSSRGIGRAIAIHLAELGARIVINYTSKAAD. 26–50 lines the NADP(+) pocket; the sequence is RGIGRAIAIHLAELGARIVINYTSK. Ser-165 contacts substrate. Tyr-178 (proton acceptor) is an active-site residue.

Belongs to the short-chain dehydrogenases/reductases (SDR) family.

Its subcellular location is the plastid. The protein resides in the chloroplast. Functionally, aldehyde reductase that catalyzes the reduction of the aldehyde carbonyl groups on saturated and alpha,beta-unsaturated aldehydes with more than 5 carbons. The chain is NADPH-dependent aldehyde reductase-like protein, chloroplastic from Arabidopsis thaliana (Mouse-ear cress).